An 839-amino-acid chain; its full sequence is Translation initiation factor IF-2 (839 aa).

2 stretches are compositionally biased toward basic and acidic residues: residues 1–12 (MSDNEIKNETPK) and 57–67 (AEAKAQEKQAA). Disordered regions lie at residues 1–21 (MSDN…RRTK) and 57–244 (AEAK…GASL). The segment covering 68–90 (EKAAQAQTEAKAQTEQACTTKKT) has biased composition (low complexity). 3 stretches are compositionally biased toward basic and acidic residues: residues 104-167 (PKTE…REET), 185-199 (READ…EGNR), and 212-233 (GGRE…DIKG). One can recognise a tr-type G domain in the interval 338-508 (TRAPVVTIMG…ILQSEVLELT (171 aa)). The tract at residues 347 to 354 (GHVDHGKT) is G1. 347–354 (GHVDHGKT) contacts GTP. Residues 372-376 (GITQH) form a G2 region. A G3 region spans residues 394 to 397 (DTPG). Residues 394–398 (DTPGH) and 448–451 (NKID) each bind GTP. The tract at residues 448 to 451 (NKID) is G4. A G5 region spans residues 484-486 (SAK).

The protein belongs to the TRAFAC class translation factor GTPase superfamily. Classic translation factor GTPase family. IF-2 subfamily.

The protein localises to the cytoplasm. Functionally, one of the essential components for the initiation of protein synthesis. Protects formylmethionyl-tRNA from spontaneous hydrolysis and promotes its binding to the 30S ribosomal subunits. Also involved in the hydrolysis of GTP during the formation of the 70S ribosomal complex. The sequence is that of Translation initiation factor IF-2 from Haemophilus ducreyi (strain 35000HP / ATCC 700724).